A 298-amino-acid chain; its full sequence is tRNA dimethylallyltransferase 2 (298 aa).

Residue 19-26 (GATATGKT) coordinates ATP. 21-26 (TATGKT) lines the substrate pocket. The segment at 44–47 (DSRQ) is interaction with substrate tRNA.

This sequence belongs to the IPP transferase family. In terms of assembly, monomer. It depends on Mg(2+) as a cofactor.

The catalysed reaction is adenosine(37) in tRNA + dimethylallyl diphosphate = N(6)-dimethylallyladenosine(37) in tRNA + diphosphate. Its function is as follows. Catalyzes the transfer of a dimethylallyl group onto the adenine at position 37 in tRNAs that read codons beginning with uridine, leading to the formation of N6-(dimethylallyl)adenosine (i(6)A). The protein is tRNA dimethylallyltransferase 2 of Treponema denticola (strain ATCC 35405 / DSM 14222 / CIP 103919 / JCM 8153 / KCTC 15104).